Here is a 3029-residue protein sequence, read N- to C-terminus: Polycystin-1-related protein (3029 aa).

Positions 1 to 21 (MAKHLYLAFSLILVPFLVSKA) are cleaved as a signal peptide. Residues 22–1685 (KQTSNGEVPW…RDTDKLKNSP (1664 aa)) are Extracellular-facing. The WSC domain occupies 29–121 (VPWLVGCYRY…KNVASVYSTA (93 aa)). 2 consecutive PKD domains span residues 364-450 (EGHC…IKGV) and 546-634 (DHLF…PECY). Residues 633–1476 (CYTRGVAIVG…NPYFSDMNHT (844 aa)) enclose the REJ domain. Disordered stretches follow at residues 754 to 773 (RKGP…HPDE), 909 to 931 (CPSD…SNSP), and 989 to 1051 (TSAI…PNKP). Polar residues predominate over residues 918-931 (VTPSTTPMTDSNSP). Residues 997-1013 (SGDVDDDEVNNDNDDDS) are compositionally biased toward acidic residues. Polar residues predominate over residues 1020 to 1047 (TLPTPLSMTNANSVNKPIITTDTPSFNK). The region spanning 1525-1671 (RNVHVINQTA…GFIQPPNSLH (147 aa)) is the GAIN-B domain. 2 disulfide bridges follow: Cys-1624-Cys-1651 and Cys-1639-Cys-1653. A GPS region spans residues 1624–1671 (CFYWNKRGKHWASDGCRLEKSINHTLVCRCNHLTAFSGGFIQPPNSLH). The helical transmembrane segment at 1686–1706 (LTMVLVISILVMYFLLLGFCV) threads the bilayer. At 1707-1895 (KADRHDKKKL…SYSRFTRAQR (189 aa)) the chain is on the cytoplasmic side. Residues 1733 to 1851 (SRFQLSVQTG…GNGKVECELF (119 aa)) form the PLAT domain. The helical transmembrane segment at 1896–1916 (LSCCLSLLLSFLCVNIAWYRP) threads the bilayer. The Extracellular portion of the chain corresponds to 1917-1933 (KIEVTEVLGVLDVSANS). The helical transmembrane segment at 1934–1954 (IMIGVLGSLMVLPVNFLWIFF) threads the bilayer. The Cytoplasmic segment spans residues 1955 to 2101 (FRYSRRSLSR…YRSKFSLPHG (147 aa)). A helical membrane pass occupies residues 2102-2122 (FVYVAWFGCLITGTVTSAITI). Over 2123-2140 (WYGLSFGWDLSVHWFQSL) the chain is Extracellular. Residues 2141-2161 (VFSLLESLLLSQPIMVLAFIF) traverse the membrane as a helical segment. Topologically, residues 2162–2250 (YMSHKTKSGK…SLKNRVLRNY (89 aa)) are cytoplasmic. A helical transmembrane segment spans residues 2251–2271 (VVELFVFIMFFVVTCALVFSV). The Extracellular segment spans residues 2272 to 2462 (ADPDVYHLNQ…GYSYFIRFTK (191 aa)). The helical transmembrane segment at 2463-2483 (LLFVVFFLYLLQHEFFLALKM) threads the bilayer. Residues 2484–2496 (TFSYFTNFWRVYQ) lie on the Cytoplasmic side of the membrane. The helical transmembrane segment at 2497-2517 (LLTIAISSACIVSYIHWSLSL) threads the bilayer. The Extracellular portion of the chain corresponds to 2518–2538 (YALLREVETERQSRVFYLSRQ). Residues 2539-2559 (ISWSQGFLQASYSLLLFLLLI) form a helical membrane-spanning segment. The Cytoplasmic portion of the chain corresponds to 2560 to 2586 (RCLHLLRPFRFVRHFGRILSTSISSLL). The chain crosses the membrane as a helical span at residues 2587-2607 (ACWVFGFILVVAFAHPGYLLF). At 2608-2651 (GSVHSSFKSFGDAFLLVTSFFRLEGVARYQDFALEEQTLLLSTY) the chain is on the extracellular side. The helical transmembrane segment at 2652–2672 (FALFLIGFCVIVRGSTAAVVL) threads the bilayer. At 2673 to 3029 (HGIRCLGKRR…PVGQRVVSAM (357 aa)) the chain is on the cytoplasmic side. Residues 2704-2726 (KKPKKPRPNSVSDLEETDDEDDL) form a disordered region. The span at 2716 to 2726 (DLEETDDEDDL) shows a compositional bias: acidic residues.

Belongs to the polycystin family. In terms of assembly, heterodimer of 2 chains generated by proteolytic processing; the large extracellular N-terminal fragment and the membrane-bound C-terminal fragment predominantly remain associated and non-covalently linked. In terms of processing, autoproteolytically processed at the GPS region of the GAIN-B domain; this cleavage modulates receptor activity. As to expression, component of the acid-insoluble and acid-soluble organic matrix of the aragonitic skeleton (at protein level).

The protein resides in the membrane. The polypeptide is Polycystin-1-related protein (Acropora millepora (Staghorn coral)).